A 407-amino-acid polypeptide reads, in one-letter code: Arrestin domain-containing protein 2 (407 aa).

This sequence belongs to the arrestin family. In terms of assembly, interacts with WWP1 (via WW domains).

This is Arrestin domain-containing protein 2 (ARRDC2) from Homo sapiens (Human).